The chain runs to 287 residues: 4-hydroxybenzoate octaprenyltransferase (287 aa).

The next 8 helical transmembrane spans lie at 19 to 39, 43 to 63, 94 to 116, 135 to 155, 160 to 180, 207 to 227, 234 to 254, and 269 to 286; these read PIGS…AADG, LHVL…GCVI, LALA…PLVI, FFAI…PMGF, GEVP…AVAY, FDVA…GWVG, ALYF…YTLI, and NNWL…DYLI.

It belongs to the UbiA prenyltransferase family. Mg(2+) is required as a cofactor.

The protein localises to the cell inner membrane. It catalyses the reaction all-trans-octaprenyl diphosphate + 4-hydroxybenzoate = 4-hydroxy-3-(all-trans-octaprenyl)benzoate + diphosphate. The protein operates within cofactor biosynthesis; ubiquinone biosynthesis. In terms of biological role, catalyzes the prenylation of para-hydroxybenzoate (PHB) with an all-trans polyprenyl group. Mediates the second step in the final reaction sequence of ubiquinone-8 (UQ-8) biosynthesis, which is the condensation of the polyisoprenoid side chain with PHB, generating the first membrane-bound Q intermediate 3-octaprenyl-4-hydroxybenzoate. This is 4-hydroxybenzoate octaprenyltransferase from Azoarcus sp. (strain BH72).